The sequence spans 276 residues: CTD small phosphatase-like protein (276 aa).

The segment at 1 to 25 (MDGPAIITQVTNPKEDEGRLPGAGE) is disordered. Residues 102–260 (LDYGKKCVVI…LDLIPFFEGL (159 aa)) enclose the FCP1 homology domain. Residue Asp112 is the 4-aspartylphosphate intermediate of the active site. Mg(2+)-binding residues include Asp112, Asp114, and Asn223. Asp114 functions as the Proton donor in the catalytic mechanism.

In terms of assembly, interacts with REST. Monomer. It depends on Mg(2+) as a cofactor. As to expression, expression is restricted to non-neuronal tissues.

The protein localises to the nucleus. The enzyme catalyses O-phospho-L-seryl-[protein] + H2O = L-seryl-[protein] + phosphate. It catalyses the reaction O-phospho-L-threonyl-[protein] + H2O = L-threonyl-[protein] + phosphate. Recruited by REST to neuronal genes that contain RE-1 elements, leading to neuronal gene silencing in non-neuronal cells. Preferentially catalyzes the dephosphorylation of 'Ser-5' within the tandem 7 residue repeats in the C-terminal domain (CTD) of the largest RNA polymerase II subunit POLR2A. Negatively regulates RNA polymerase II transcription, possibly by controlling the transition from initiation/capping to processive transcript elongation. The chain is CTD small phosphatase-like protein (CTDSPL) from Homo sapiens (Human).